The primary structure comprises 299 residues: Protease HtpX homolog (299 aa).

2 helical membrane-spanning segments follow: residues Leu19 to Phe39 and Trp41 to Tyr61. His146 contacts Zn(2+). The active site involves Glu147. His150 serves as a coordination point for Zn(2+). The next 2 membrane-spanning stretches (helical) occupy residues Ile156 to Met176 and Ile198 to Ile218. Glu227 contacts Zn(2+).

Belongs to the peptidase M48B family. Zn(2+) serves as cofactor.

The protein resides in the cell membrane. This Thermoanaerobacter pseudethanolicus (strain ATCC 33223 / 39E) (Clostridium thermohydrosulfuricum) protein is Protease HtpX homolog.